Here is a 353-residue protein sequence, read N- to C-terminus: MTAILERRESTSLWGRFCNWITSTENRLYIGWFGVLMIPTLLTATSVFIIAFIAAPPVDIDGIREPVSGSLLYGNNIISGAIIPTSAAIGLHFYPIWEAASVDEWLYNGGPYELIVLHFLLGVACYMGREWELSFRLGMRPWIAVAYSAPVAAATAVFLIYPIGQGSFSDGMPLGISGTFNFMIVFQAEHNILMHPFHMLGVAGVFGGSLFSAMHGSLVTSSLIRETTENESANEGYRFGQEEETYNIVAAHGYFGRLIFQYASFNNSRSLHFFLAAWPVVGIWFTALGISTMAFNLNGFNFNQSVVDSQGRVINTWADIINRANLGMEVMHERNAHNFPLDLAAVEAPSTNG.

At Thr-2 the chain carries N-acetylthreonine. The residue at position 2 (Thr-2) is a Phosphothreonine. 3 helical membrane passes run 29–46 (YIGW…TATS), 118–133 (HFLL…EWEL), and 142–156 (WIAV…AATA). A chlorophyll a-binding site is contributed by His-118. Tyr-126 serves as a coordination point for pheophytin a. [CaMn4O5] cluster is bound by residues Asp-170 and Glu-189. The helical transmembrane segment at 197–218 (FHMLGVAGVFGGSLFSAMHGSL) threads the bilayer. His-198 provides a ligand contact to chlorophyll a. A quinone contacts are provided by residues His-215 and 264-265 (SF). Residue His-215 participates in Fe cation binding. His-272 is a Fe cation binding site. Residues 274–288 (FLAAWPVVGIWFTAL) form a helical membrane-spanning segment. [CaMn4O5] cluster contacts are provided by His-332, Glu-333, Asp-342, and Ala-344. The propeptide occupies 345 to 353 (AVEAPSTNG).

It belongs to the reaction center PufL/M/PsbA/D family. In terms of assembly, PSII is composed of 1 copy each of membrane proteins PsbA, PsbB, PsbC, PsbD, PsbE, PsbF, PsbH, PsbI, PsbJ, PsbK, PsbL, PsbM, PsbT, PsbX, PsbY, PsbZ, Psb30/Ycf12, at least 3 peripheral proteins of the oxygen-evolving complex and a large number of cofactors. It forms dimeric complexes. The D1/D2 heterodimer binds P680, chlorophylls that are the primary electron donor of PSII, and subsequent electron acceptors. It shares a non-heme iron and each subunit binds pheophytin, quinone, additional chlorophylls, carotenoids and lipids. D1 provides most of the ligands for the Mn4-Ca-O5 cluster of the oxygen-evolving complex (OEC). There is also a Cl(-1) ion associated with D1 and D2, which is required for oxygen evolution. The PSII complex binds additional chlorophylls, carotenoids and specific lipids. is required as a cofactor. Tyr-161 forms a radical intermediate that is referred to as redox-active TyrZ, YZ or Y-Z. In terms of processing, C-terminally processed by CTPA; processing is essential to allow assembly of the oxygen-evolving complex and thus photosynthetic growth.

The protein resides in the plastid. The protein localises to the chloroplast thylakoid membrane. The enzyme catalyses 2 a plastoquinone + 4 hnu + 2 H2O = 2 a plastoquinol + O2. In terms of biological role, photosystem II (PSII) is a light-driven water:plastoquinone oxidoreductase that uses light energy to abstract electrons from H(2)O, generating O(2) and a proton gradient subsequently used for ATP formation. It consists of a core antenna complex that captures photons, and an electron transfer chain that converts photonic excitation into a charge separation. The D1/D2 (PsbA/PsbD) reaction center heterodimer binds P680, the primary electron donor of PSII as well as several subsequent electron acceptors. The protein is Photosystem II protein D1 of Drimys granadensis.